A 545-amino-acid polypeptide reads, in one-letter code: Serine/threonine-protein kinase PAK 1 (545 aa).

The tract at residues 1 to 77 (MSNNGLDIQD…KEKERPEISL (77 aa)) is disordered. N-acetylserine is present on Ser2. Residue Ser21 is modified to Phosphoserine; by PKB and autocatalysis. A Phosphoserine; by autocatalysis modification is found at Ser57. The span at 68-77 (KEKERPEISL) shows a compositional bias: basic and acidic residues. An autoregulatory region region spans residues 70 to 140 (KERPEISLPS…YNSKKTSNSQ (71 aa)). Residues 75 to 88 (ISLPSDFEHTIHVG) enclose the CRIB domain. The segment at 75 to 105 (ISLPSDFEHTIHVGFDAVTGEFTGMPEQWAR) is GTPase-binding. Residue Thr84 is modified to Phosphothreonine; by OXSR1. A Phosphoserine modification is found at Ser115. A phosphotyrosine mark is found at Tyr131 and Tyr142. Ser144 is modified (phosphoserine; by autocatalysis). Residue Ser149 is modified to Phosphoserine. Residue Tyr153 is modified to Phosphotyrosine; by JAK2. A disordered region spans residues 159–198 (LNVKAVSETPAVPPVSEDEDDDDDDATPPPVIAPRPEHTK). At Ser174 the chain carries Phosphoserine. Positions 174 to 184 (SEDEDDDDDDA) are enriched in acidic residues. At Thr185 the chain carries Phosphothreonine. Ser199 bears the Phosphoserine; by autocatalysis mark. Tyr201 is subject to Phosphotyrosine; by JAK2. Position 204 is a phosphoserine (Ser204). The interval 211-251 (VTPTRDVATSPISPTENNTTPPDALTRNTEKQKKKPKMSDE) is disordered. Phosphothreonine is present on residues Thr212 and Thr219. Phosphoserine is present on residues Ser220 and Ser223. Over residues 220–231 (SPISPTENNTTP) the composition is skewed to polar residues. Phosphothreonine is present on residues Thr225, Thr229, and Thr230. The Protein kinase domain maps to 270–521 (YTRFEKIGQG…AKELLQHQFL (252 aa)). 276-284 (IGQGASGTV) contacts ATP. The residue at position 285 (Tyr285) is a Phosphotyrosine; by JAK2. Residues Lys299 and 345 to 347 (EYL) each bind ATP. Asp389 acts as the Proton acceptor in catalysis. Phosphothreonine; by autocatalysis, BRSK2 and PDPK1 is present on Thr423.

The protein belongs to the protein kinase superfamily. STE Ser/Thr protein kinase family. STE20 subfamily. Homodimer; homodimerization results in autoinhibition. Active as monomer. Interacts with GIT1. Component of cytoplasmic complexes, which also contains PXN, ARHGEF7 and GIT1. Interacts with NISCH. Interacts with DVL1; mediates the formation of a DVL1, MUSK and PAK1 ternary complex involved in AChR clustering. Binds to the caspase-cleaved p110 isoform of CDC2L1 and CDC2L2, p110C, but not the full-length proteins. Interacts with ARHGEF7. Interacts tightly with GTP-bound but not GDP-bound CDC42/P21 and RAC1. Interacts with SCRIB. Interacts with PDPK1. Interacts (via kinase domain) with RAF1. Interacts with NCK1 and NCK2. Interacts with TBCB. Interacts with BRSK2. Interacts with SNAI1. Interacts with CIB1 isoform 2. Interacts with CIB1 (via N-terminal region); the interaction is direct, promotes PAK1 activity and occurs in a calcium-dependent manner. Interacts with INPP5K. Interacts with gamma-tubulin. Interacts with RHOU; the interaction promotes PAK1 activation. Requires Mg(2+) as cofactor. Autophosphorylated in trans, meaning that in a dimer, one kinase molecule phosphorylates the other one. Activated by autophosphorylation at Thr-423 in response to a conformation change, triggered by interaction with GTP-bound CDC42 or RAC1. Activated by phosphorylation at Thr-423 by BRSK2 and by PDPK1. Phosphorylated by JAK2 in response to PRL; this increases PAK1 kinase activity. Phosphorylated at Ser-21 by PKB/AKT; this reduces interaction with NCK1 and association with focal adhesion sites. Upon DNA damage, phosphorylated at Thr-212 and translocates to the nucleoplasm. Phosphorylated at tyrosine residues, which can be enhanced by NTN1. As to expression, overexpressed in gastric cancer cells and tissues (at protein level).

Its subcellular location is the cytoplasm. It localises to the cell junction. The protein localises to the focal adhesion. It is found in the cell projection. The protein resides in the lamellipodium. Its subcellular location is the cell membrane. It localises to the ruffle membrane. The protein localises to the invadopodium. It is found in the nucleus. The protein resides in the nucleoplasm. Its subcellular location is the chromosome. It localises to the cytoskeleton. The protein localises to the microtubule organizing center. It is found in the centrosome. It catalyses the reaction L-seryl-[protein] + ATP = O-phospho-L-seryl-[protein] + ADP + H(+). It carries out the reaction L-threonyl-[protein] + ATP = O-phospho-L-threonyl-[protein] + ADP + H(+). With respect to regulation, activated by binding small G proteins. Binding of GTP-bound CDC42 or RAC1 to the autoregulatory region releases monomers from the autoinhibited dimer, and enables activation by phosphorylation of Thr-423. Phosphorylation of Thr-84 by OXSR1 inhibits activation. Functionally, protein kinase involved in intracellular signaling pathways downstream of integrins and receptor-type kinases that plays an important role in cytoskeleton dynamics, in cell adhesion, migration, proliferation, apoptosis, mitosis, and in vesicle-mediated transport processes. Can directly phosphorylate BAD and protects cells against apoptosis. Activated by interaction with CDC42 and RAC1. Functions as a GTPase effector that links the Rho-related GTPases CDC42 and RAC1 to the JNK MAP kinase pathway. Phosphorylates and activates MAP2K1, and thereby mediates activation of downstream MAP kinases. Involved in the reorganization of the actin cytoskeleton, actin stress fibers and of focal adhesion complexes. Phosphorylates the tubulin chaperone TBCB and thereby plays a role in the regulation of microtubule biogenesis and organization of the tubulin cytoskeleton. Plays a role in the regulation of insulin secretion in response to elevated glucose levels. Part of a ternary complex that contains PAK1, DVL1 and MUSK that is important for MUSK-dependent regulation of AChR clustering during the formation of the neuromuscular junction (NMJ). Activity is inhibited in cells undergoing apoptosis, potentially due to binding of CDC2L1 and CDC2L2. Phosphorylates MYL9/MLC2. Phosphorylates RAF1 at 'Ser-338' and 'Ser-339' resulting in: activation of RAF1, stimulation of RAF1 translocation to mitochondria, phosphorylation of BAD by RAF1, and RAF1 binding to BCL2. Phosphorylates SNAI1 at 'Ser-246' promoting its transcriptional repressor activity by increasing its accumulation in the nucleus. In podocytes, promotes NR3C2 nuclear localization. Required for atypical chemokine receptor ACKR2-induced phosphorylation of LIMK1 and cofilin (CFL1) and for the up-regulation of ACKR2 from endosomal compartment to cell membrane, increasing its efficiency in chemokine uptake and degradation. In synapses, seems to mediate the regulation of F-actin cluster formation performed by SHANK3, maybe through CFL1 phosphorylation and inactivation. Plays a role in RUFY3-mediated facilitating gastric cancer cells migration and invasion. In response to DNA damage, phosphorylates MORC2 which activates its ATPase activity and facilitates chromatin remodeling. In neurons, plays a crucial role in regulating GABA(A) receptor synaptic stability and hence GABAergic inhibitory synaptic transmission through its role in F-actin stabilization. In hippocampal neurons, necessary for the formation of dendritic spines and excitatory synapses; this function is dependent on kinase activity and may be exerted by the regulation of actomyosin contractility through the phosphorylation of myosin II regulatory light chain (MLC). Along with GIT1, positively regulates microtubule nucleation during interphase. Phosphorylates FXR1, promoting its localization to stress granules and activity. Phosphorylates ILK on 'Thr-173' and 'Ser-246', promoting nuclear export of ILK. The protein is Serine/threonine-protein kinase PAK 1 of Homo sapiens (Human).